The chain runs to 1171 residues: Protein diaphanous homolog 3 (1171 aa).

The span at methionine 1–serine 15 shows a compositional bias: basic and acidic residues. The tract at residues methionine 1–histidine 40 is disordered. Positions serine 16–leucine 39 match the Nuclear localization signal motif. Residue threonine 47 is modified to Phosphothreonine. Serine 56 is subject to Phosphoserine. Positions proline 60–alanine 95 are disordered. The segment covering serine 76 to serine 86 has biased composition (low complexity). The GBD/FH3 domain occupies proline 93–aspartate 455. Serine 154 bears the Phosphoserine mark. Coiled-coil stretches lie at residues glutamate 373–leucine 403 and glutamine 478–leucine 533. Residues alanine 532–glycine 601 are disordered. The 71-residue stretch at proline 540–proline 610 folds into the FH1 domain. The segment covering alanine 553–leucine 596 has biased composition (pro residues). Phosphoserine is present on serine 604. The FH2 domain maps to proline 615 to arginine 1013. Coiled coils occupy residues aspartate 887–phenylalanine 918 and methionine 988–threonine 1038. The 31-residue stretch at aspartate 1036–aspartate 1066 folds into the DAD domain. Phosphoserine is present on residues serine 1072 and serine 1157. Positions glutamate 1162 to leucine 1171 match the Nuclear export signal motif.

The protein belongs to the formin homology family. Diaphanous subfamily. Ubiquitinated.

It is found in the cytoplasm. It localises to the nucleus. Functionally, actin nucleation and elongation factor required for the assembly of F-actin structures, such as actin cables and stress fibers. Required for cytokinesis, stress fiber formation and transcriptional activation of the serum response factor. Binds to GTP-bound form of Rho and to profilin: acts in a Rho-dependent manner to recruit profilin to the membrane, where it promotes actin polymerization. DFR proteins couple Rho and Src tyrosine kinase during signaling and the regulation of actin dynamics. Also acts as an actin nucleation and elongation factor in the nucleus by promoting nuclear actin polymerization inside the nucleus to drive serum-dependent SRF-MRTFA activity. The chain is Protein diaphanous homolog 3 (Diaph3) from Mus musculus (Mouse).